The following is a 566-amino-acid chain: Urease subunit alpha (566 aa).

Residues 128 to 566 (GGIDTHIHWI…LPMAQRYFLF (439 aa)) enclose the Urease domain. Residues His-133, His-135, and Lys-216 each coordinate Ni(2+). An N6-carboxylysine modification is found at Lys-216. His-218 contributes to the substrate binding site. Ni(2+) contacts are provided by His-245 and His-271. His-319 acts as the Proton donor in catalysis. Residue Asp-359 participates in Ni(2+) binding.

It belongs to the metallo-dependent hydrolases superfamily. Urease alpha subunit family. Heterotrimer of UreA (gamma), UreB (beta) and UreC (alpha) subunits. Three heterotrimers associate to form the active enzyme. Ni cation is required as a cofactor. In terms of processing, carboxylation allows a single lysine to coordinate two nickel ions.

Its subcellular location is the cytoplasm. It catalyses the reaction urea + 2 H2O + H(+) = hydrogencarbonate + 2 NH4(+). It participates in nitrogen metabolism; urea degradation; CO(2) and NH(3) from urea (urease route): step 1/1. The protein is Urease subunit alpha of Acinetobacter baylyi (strain ATCC 33305 / BD413 / ADP1).